A 514-amino-acid polypeptide reads, in one-letter code: Synaptic vesicular amine transporter (514 aa).

Over 1–20 (MALSELALVRWLQESRRSRK) the chain is Cytoplasmic. The chain crosses the membrane as a helical span at residues 21 to 41 (LILFIVFLALLLDNMLLTVVV). Topologically, residues 42–129 (PIIPSYLYSI…EDKDLLNENV (88 aa)) are lumenal, vesicle. N-linked (GlcNAc...) asparagine glycans are attached at residues asparagine 84 and asparagine 91. Cysteine 117 and cysteine 324 are disulfide-bonded. The helical transmembrane segment at 130-150 (QVGLLFASKATVQLITNPFIG) threads the bilayer. Over 151-159 (LLTNRIGYP) the chain is Cytoplasmic. A helical membrane pass occupies residues 160 to 180 (IPIFAGFCIMFVSTIMFAFSS). Topologically, residues 181-189 (SYAFLLIAR) are lumenal, vesicle. Residues 190–210 (SLQGIGSSCSSVAGMGMLASV) traverse the membrane as a helical segment. Residues 211 to 219 (YTDDEERGN) lie on the Cytoplasmic side of the membrane. A helical membrane pass occupies residues 220–242 (VMGIALGGLAMGVLVGPPFGSVL). The serotonin site is built by leucine 228 and valine 232. Topologically, residues 243-248 (YEFVGK) are lumenal, vesicle. A helical transmembrane segment spans residues 249–271 (TAPFLVLAALVLLDGAIQLFVLQ). The Cytoplasmic portion of the chain corresponds to 272–291 (PSRVQPESQKGTPLTTLLKD). The chain crosses the membrane as a helical span at residues 292-311 (PYILIAAGSICFANMGIAML). The serotonin site is built by asparagine 305, isoleucine 308, glutamate 312, phenylalanine 334, and tyrosine 341. Residues 312-328 (EPALPIWMMETMCSRKW) are Lumenal, vesicle-facing. The chain crosses the membrane as a helical span at residues 329–352 (QLGVAFLPASISYLIGTNIFGILA). At 353–357 (HKMGR) the chain is on the cytoplasmic side. Residues 358 to 378 (WLCALLGMIIVGVSILCIPFA) form a helical membrane-spanning segment. Over 379 to 389 (KNIYGLIAPNF) the chain is Lumenal, vesicle. The chain crosses the membrane as a helical span at residues 390 to 410 (GVGFAIGMVDSSMMPIMGYLV). Aspartate 399 serves as a coordination point for serotonin. Topologically, residues 411–414 (DLRH) are cytoplasmic. Residues 415 to 435 (VSVYGSVYAIADVAFCMGYAI) traverse the membrane as a helical segment. Tyrosine 433 is a binding site for serotonin. Residues 436–440 (GPSAG) are Lumenal, vesicle-facing. Residues 441 to 462 (GAIAKAIGFPWLMTIIGIIDIL) form a helical membrane-spanning segment. Topologically, residues 463 to 514 (FAPLCFFLRSPPAKEEKMAILMDHNCPIKTKMYTQNNIQSYPIGEDEESESD) are cytoplasmic. Residues serine 511 and serine 513 each carry the phosphoserine modification.

It belongs to the major facilitator superfamily. Vesicular transporter family. Interacts with SLC6A3. Expressed in neuronal and neuroendocrine tissues. Detected in central and peripheral nervous system in particular in axonal and dendritic processes in dopaminergic cells of substantia nigra, histaminergic neuronal cell bodies of substantia nigra and tuberomammillary nucleus, in ganglion cells of sympathetic glia and in peripheral sympathetic nerve terminals in stomach and duodenum (at protein level). Highly expressed in chromaffin cells of the adrenal medulla and histamine-storing enterochromaffin-like cells of oxyntic mucosa (at protein level).

The protein localises to the cytoplasmic vesicle. It is found in the secretory vesicle. Its subcellular location is the synaptic vesicle membrane. The protein resides in the secretory vesicle membrane. It localises to the cell projection. The protein localises to the axon. It is found in the dendrite. It catalyses the reaction serotonin(in) + 2 H(+)(out) = serotonin(out) + 2 H(+)(in). It carries out the reaction dopamine(in) + 2 H(+)(out) = dopamine(out) + 2 H(+)(in). The catalysed reaction is histamine(in) + 2 H(+)(out) = histamine(out) + 2 H(+)(in). With respect to regulation, strongly inhibited by reserpine and tetrabenazine. Also inhibited to a lesser extent by ketanserin and fenfluramine. Reserpine and ketanserin inhibit by blocking the substrate-binding pocket. Tetrabenazine traps SLC18A2/VMAT2 in an occluded conformation and its inhibition is specific to SLC18A2/VMAT2 but not SLC18A1/VMAT1. Electrogenic antiporter that exchanges one cationic monoamine with two intravesicular protons across the membrane of secretory and synaptic vesicles. Uses the electrochemical proton gradient established by the V-type proton-pump ATPase to accumulate high concentrations of monoamines inside the vesicles prior to their release via exocytosis. Transports a variety of catecholamines such as dopamine, adrenaline and noradrenaline, histamine, and indolamines such as serotonin. Regulates the transvesicular monoaminergic gradient that determines the quantal size. Mediates somatodendritic dopamine release in hippocampal neurons, likely as part of a regulated secretory pathway that integrates retrograde synaptic signals. Acts as a primary transporter for striatal dopamine loading ensuring impulse-dependent release of dopamine at the synaptic cleft. Responsible for histamine and serotonin storage and subsequent corelease from mast cell granules. In Homo sapiens (Human), this protein is Synaptic vesicular amine transporter (SLC18A2).